The chain runs to 445 residues: MVVRKVGKYELGRTIGEGTFAKVKFAQNTETGESVAMKIVDRSTIIKRKMVDQIKREISIMKLVRHPCVVRLYEVLASRTKIYIILEYITGGELFDKIVRNGRLSESEARKYFHQLIDGVDYCHSKGVYHRDLKPENLLLDSQGNLKISDFGLSALPEQGVTILKTTCGTPNYVAPEVLSHKGYNGAVADIWSCGVILYVLMAGYLPFDEMDLPTLYSKIDKAEFSCPSYFALGAKSLINRILDPNPETRITIAEIRKDEWFLKDYTPVQLIDYEHVNLDDVYAAFDDPEEQTYAQDGTRDTGPLTLNAFDLIILSQGLNLATLFDRGKDSMKHQTRFISHKPANVVLSSMEVVSQSMGFKTHIRNYKMRVEGLSANKTSHFSVILEVFKVAPSILMVDIQNAAGDAEEYLKFYKTFCSKLDDIIWKPPDASMRNRVTKAKSKRR.

The Protein kinase domain maps to 9-262 (YELGRTIGEG…IAEIRKDEWF (254 aa)). ATP-binding positions include 15-23 (IGEGTFAKV) and K38. The active-site Proton acceptor is D132. The tract at residues 150-177 (DFGLSALPEQGVTILKTTCGTPNYVAPE) is activation loop. The residue at position 154 (S154) is a Phosphoserine. At T166 the chain carries Phosphothreonine. The 25-residue stretch at 302 to 326 (TGPLTLNAFDLIILSQGLNLATLFD) folds into the NAF domain. The tract at residues 333 to 362 (KHQTRFISHKPANVVLSSMEVVSQSMGFKT) is PPI.

This sequence belongs to the protein kinase superfamily. CAMK Ser/Thr protein kinase family. SNF1 subfamily. As to quaternary structure, interacts with CBL1 and CBL9. It depends on Mn(2+) as a cofactor. As to expression, mostly expressed in roots, and, to a lower extent, in leaves, stems, flowers, and siliques.

It catalyses the reaction L-seryl-[protein] + ATP = O-phospho-L-seryl-[protein] + ADP + H(+). The enzyme catalyses L-threonyl-[protein] + ATP = O-phospho-L-threonyl-[protein] + ADP + H(+). In terms of biological role, CIPK serine-threonine protein kinases interact with CBL proteins. Binding of a CBL protein to the regulatory NAF domain of CIPK protein lead to the activation of the kinase in a calcium-dependent manner. This is CBL-interacting serine/threonine-protein kinase 8 (CIPK8) from Arabidopsis thaliana (Mouse-ear cress).